Consider the following 436-residue polypeptide: GTPase Obg (436 aa).

Residues 2–160 (SMFLDTAKIQ…RELLLELKVL (159 aa)) form the Obg domain. Positions 161–338 (ADVGLVGFPS…LLDATAELLD (178 aa)) constitute an OBG-type G domain. Residues 167-174 (GFPSVGKS), 192-196 (FTTIV), 214-217 (DLPG), 284-287 (NKMD), and 319-321 (SSL) contribute to the GTP site. S174 and T194 together coordinate Mg(2+). In terms of domain architecture, OCT spans 358 to 436 (GFDEEAPAFE…IGKFEFEFVD (79 aa)).

It belongs to the TRAFAC class OBG-HflX-like GTPase superfamily. OBG GTPase family. Monomer. Requires Mg(2+) as cofactor.

The protein localises to the cytoplasm. Functionally, an essential GTPase which binds GTP, GDP and possibly (p)ppGpp with moderate affinity, with high nucleotide exchange rates and a fairly low GTP hydrolysis rate. Plays a role in control of the cell cycle, stress response, ribosome biogenesis and in those bacteria that undergo differentiation, in morphogenesis control. The protein is GTPase Obg of Streptococcus gordonii (strain Challis / ATCC 35105 / BCRC 15272 / CH1 / DL1 / V288).